The primary structure comprises 908 residues: E3 ubiquitin-protein ligase ZNF598 (908 aa).

Residues 27 to 67 form an RING-type zinc finger; it reads CVLCCGDLEATALGRCDHPVCYRCSTKMRVLCEQRYCAVCR. A C2H2-type zinc finger spans residues 185 to 208; sequence PLCKFCDERYLDNDELLKHLRRDH. Disordered stretches follow at residues 292–338, 350–441, 467–557, 569–619, and 719–744; these read SRRS…KREE, SVAA…EEDF, PGPP…TVQG, SLLA…LEAP, and PSSH…TPGL. S295 carries the phosphoserine modification. Y304 is subject to Phosphotyrosine. Positions 313–329 are enriched in low complexity; the sequence is QGRAGRASGRGAQQNRR. The span at 358-385 shows a compositional bias: basic and acidic residues; the sequence is ETQRVEDREEGSRPKKEEAAARVPEEPR. S433 is modified (phosphoserine). Residues 482-501 show a composition bias toward low complexity; sequence PALVSSAPKPSSAPSSLISA. Residues 529-538 are compositionally biased toward basic residues; sequence KAGKGSRGGR.

Belongs to the ZNF598/HEL2 family. As to quaternary structure, interacts with the E2 ubiquitin-conjugating enzyme UBE2D3. Component of the 4EHP-GYF2 complex, at least composed of EIF4E2, GIGYF2 and ZNF598.

It is found in the cytoplasm. It localises to the cytosol. The enzyme catalyses S-ubiquitinyl-[E2 ubiquitin-conjugating enzyme]-L-cysteine + [acceptor protein]-L-lysine = [E2 ubiquitin-conjugating enzyme]-L-cysteine + N(6)-ubiquitinyl-[acceptor protein]-L-lysine.. It participates in protein modification; protein ubiquitination. In terms of biological role, E3 ubiquitin-protein ligase that plays a key role in the ribosome quality control (RQC), a pathway that takes place when a ribosome has stalled during translation, leading to degradation of nascent peptide chains. ZNF598 is activated when ribosomes are stalled within an mRNA following translation of prematurely polyadenylated mRNAs. Acts as a ribosome collision sensor: specifically recognizes and binds collided di-ribosome, which arises when a trailing ribosome encounters a slower leading ribosome, leading to terminally arrest translation. Following binding to colliding ribosomes, mediates monoubiquitination of 40S ribosomal proteins RPS10/eS10 and RPS3/uS3, and 'Lys-63'-linked polyubiquitination of RPS20/uS10. Polyubiquitination of RPS20/uS10 promotes recruitment of the RQT (ribosome quality control trigger) complex, which drives the disassembly of stalled ribosomes, followed by degradation of nascent peptides. E3 ubiquitin-protein ligase activity is dependent on the E2 ubiquitin-conjugating enzyme UBE2D3. Also acts as an adapter that recruits the 4EHP-GYF2 complex to mRNAs. Independently of its role in RQC, may also act as a negative regulator of interferon-stimulated gene (ISG) expression. The chain is E3 ubiquitin-protein ligase ZNF598 from Mus musculus (Mouse).